The sequence spans 621 residues: Type 2 DNA topoisomerase 6 subunit B (621 aa).

ATP contacts are provided by residues Asn-48, Asp-80, 101 to 102 (SR), 111 to 118 (GQQGIGIS), and Lys-435.

This sequence belongs to the TOP6B family. Homodimer. Heterotetramer of two Top6A and two Top6B chains.

It catalyses the reaction ATP-dependent breakage, passage and rejoining of double-stranded DNA.. Relaxes both positive and negative superturns and exhibits a strong decatenase activity. The protein is Type 2 DNA topoisomerase 6 subunit B of Methanosarcina mazei (strain ATCC BAA-159 / DSM 3647 / Goe1 / Go1 / JCM 11833 / OCM 88) (Methanosarcina frisia).